The primary structure comprises 279 residues: MKSKALLCINTLKSGAGILGDDIKVYLETKHFVEVVLIDVSKPLLSFPRENFLFLITLGGDGTVLLAVNLLLENKNVDIPIISINMGKVGFLADIKIEDFKKVIDRFFKNSLVINKKFLLHVTVYKHGKDLISRYALNDIIIRSSLLNKMIHVDLKVNSENFLSYKSDGIIVSTPTGSTGYSFSAGGPILEAELEGFLLTPISPHSVYNRSFVFSKLSKLSLSFSKEYFIAPASIFLDGINFGSFGVDVVFEFEISSQSLNFVSFCTDTFVKRLKNKLL.

The active-site Proton acceptor is aspartate 61. NAD(+) contacts are provided by residues 61–62, 138–139, lysine 149, lysine 166, aspartate 168, and 179–184; these read DG, ND, and TGYSFS.

The protein belongs to the NAD kinase family. A divalent metal cation serves as cofactor.

It is found in the cytoplasm. It catalyses the reaction NAD(+) + ATP = ADP + NADP(+) + H(+). Its function is as follows. Involved in the regulation of the intracellular balance of NAD and NADP, and is a key enzyme in the biosynthesis of NADP. Catalyzes specifically the phosphorylation on 2'-hydroxyl of the adenosine moiety of NAD to yield NADP. The polypeptide is NAD kinase (Borrelia garinii subsp. bavariensis (strain ATCC BAA-2496 / DSM 23469 / PBi) (Borreliella bavariensis)).